The following is a 152-amino-acid chain: Lipoprotein signal peptidase (152 aa).

Helical transmembrane passes span 33 to 53, 58 to 78, and 83 to 102; these read VVPP…FGLL, MLFV…YFKI, and PVLD…NLAD. Active-site residues include D111 and D125. Residues 120-140 traverse the membrane as a helical segment; it reads VFNLADTAIVTGAFLLAWALL.

Belongs to the peptidase A8 family.

The protein localises to the cell membrane. It carries out the reaction Release of signal peptides from bacterial membrane prolipoproteins. Hydrolyzes -Xaa-Yaa-Zaa-|-(S,diacylglyceryl)Cys-, in which Xaa is hydrophobic (preferably Leu), and Yaa (Ala or Ser) and Zaa (Gly or Ala) have small, neutral side chains.. Its pathway is protein modification; lipoprotein biosynthesis (signal peptide cleavage). This protein specifically catalyzes the removal of signal peptides from prolipoproteins. This Pelotomaculum thermopropionicum (strain DSM 13744 / JCM 10971 / SI) protein is Lipoprotein signal peptidase.